We begin with the raw amino-acid sequence, 77 residues long: Acyl carrier protein (77 aa).

A Carrier domain is found at 2–77 (STIEERVKKI…EAIDYVVSHQ (76 aa)). An O-(pantetheine 4'-phosphoryl)serine modification is found at Ser-37.

Belongs to the acyl carrier protein (ACP) family. 4'-phosphopantetheine is transferred from CoA to a specific serine of apo-ACP by AcpS. This modification is essential for activity because fatty acids are bound in thioester linkage to the sulfhydryl of the prosthetic group.

It is found in the cytoplasm. Its pathway is lipid metabolism; fatty acid biosynthesis. Functionally, carrier of the growing fatty acid chain in fatty acid biosynthesis. In Oceanospirillum linum, this protein is Acyl carrier protein.